The chain runs to 459 residues: MDLDTITSISTPMGEGAIGIVRLSGPQAVEIADKLYKGKHLLNDVPSHTINYGHIIDPESKEVVEEVMVSVLRAPKTFTREDIIEINCHGGILTINRVLELTMTYGARMAEPGEFTKRAFLNGRIDLSQAEAVMDFIRSKTDRASKVAMNQIEGRLSDLIKKQRQSILEILAQVEVNIDYPEYDDVEDATTEFLLEQSKEIKQEINRLLDTGAQGKIMREGLSTVIVGKPNVGKSSMLNNLIQDNKAIVTEVAGTTRDVLEEYVNVRGVPLRLVDTAGIRETEDIVEKIGVERSRKALSQADLILFVLNNNEALTQEDYTLYEVVKNEDVIVIVNKMDLEQNIDINEVKDMIGDTPLIQTSMLKQEGIDELEIQIRDLFFGGEVQNQDMTYVSNSRHISLLKQARQTIQDAIDAAESGVPMDMVQIDLTRTWEILGEIIGETASDELIDQLFSQFCLGK.

Positions 22, 85, and 124 each coordinate (6S)-5-formyl-5,6,7,8-tetrahydrofolate. The TrmE-type G domain maps to 221–380 (GLSTVIVGKP…LEIQIRDLFF (160 aa)). Residue asparagine 231 coordinates K(+). GTP-binding positions include 231-236 (NVGKSS), 250-256 (TEVAGTT), and 275-278 (DTAG). Serine 235 provides a ligand contact to Mg(2+). Residues threonine 250, valine 252, and threonine 255 each contribute to the K(+) site. Threonine 256 lines the Mg(2+) pocket. Lysine 459 contributes to the (6S)-5-formyl-5,6,7,8-tetrahydrofolate binding site.

This sequence belongs to the TRAFAC class TrmE-Era-EngA-EngB-Septin-like GTPase superfamily. TrmE GTPase family. Homodimer. Heterotetramer of two MnmE and two MnmG subunits. K(+) is required as a cofactor.

It is found in the cytoplasm. Functionally, exhibits a very high intrinsic GTPase hydrolysis rate. Involved in the addition of a carboxymethylaminomethyl (cmnm) group at the wobble position (U34) of certain tRNAs, forming tRNA-cmnm(5)s(2)U34. The protein is tRNA modification GTPase MnmE of Staphylococcus aureus (strain MW2).